Here is an 825-residue protein sequence, read N- to C-terminus: Glycerol-3-phosphate acyltransferase (825 aa).

Residues 306-311 (CHRSHM) carry the HXXXXD motif motif. The disordered stretch occupies residues 802-825 (SASSSTEMEASTSSSQTAEETTQG).

This sequence belongs to the GPAT/DAPAT family.

Its subcellular location is the cell inner membrane. It carries out the reaction sn-glycerol 3-phosphate + an acyl-CoA = a 1-acyl-sn-glycero-3-phosphate + CoA. It functions in the pathway phospholipid metabolism; CDP-diacylglycerol biosynthesis; CDP-diacylglycerol from sn-glycerol 3-phosphate: step 1/3. The chain is Glycerol-3-phosphate acyltransferase from Pectobacterium atrosepticum (strain SCRI 1043 / ATCC BAA-672) (Erwinia carotovora subsp. atroseptica).